Reading from the N-terminus, the 155-residue chain is MLVTMRLSRSIAVFTLVTYATGLPSLQVIPRGEPQLPLLDPSMTIKEAARKCGDKAQLSCCNRVVKAGDYTSVDEGIGAGLLSNLAGGGSGISSILAFDQCSRLDAQVPVVLLPIQDLLNQHCKQNVACCQKNPGDASSSGVGVSLPCIALGSVA.

Residues 1 to 22 (MLVTMRLSRSIAVFTLVTYATG) form the signal peptide. 4 cysteine pairs are disulfide-bonded: Cys52/Cys129, Cys60/Cys123, Cys61/Cys101, and Cys130/Cys148.

The protein belongs to the fungal hydrophobin family. As to quaternary structure, self-assembles to form functional amyloid fibrils called rodlets. Self-assembly into fibrillar rodlets occurs spontaneously at hydrophobic:hydrophilic interfaces and the rodlets further associate laterally to form amphipathic monolayers.

Its subcellular location is the secreted. The protein resides in the spore wall. Its function is as follows. Aerial growth, conidiation, and dispersal of filamentous fungi in the environment rely upon a capability of their secreting small amphipathic proteins called hydrophobins (HPBs) with low sequence identity. Class I can self-assemble into an outermost layer of rodlet bundles on aerial cell surfaces, conferring cellular hydrophobicity that supports fungal growth, development and dispersal; whereas Class II form highly ordered films at water-air interfaces through intermolecular interactions but contribute nothing to the rodlet structure. RodC is a class I hydrophobin that, unlike rodA, is not required for rodlet formation. This is Class I hydrophobin C from Aspergillus fumigatus (strain ATCC MYA-4609 / CBS 101355 / FGSC A1100 / Af293) (Neosartorya fumigata).